The following is a 283-amino-acid chain: Formamidopyrimidine-DNA glycosylase (283 aa).

Pro2 (schiff-base intermediate with DNA) is an active-site residue. Glu3 functions as the Proton donor in the catalytic mechanism. The active-site Proton donor; for beta-elimination activity is Lys58. The DNA site is built by His100, Arg119, and Arg162. The FPG-type zinc finger occupies 247 to 283 (DVYGREGAPCKGEGCTGQIKRIVQSGRSSFYCAQCQR). Arg273 acts as the Proton donor; for delta-elimination activity in catalysis.

The protein belongs to the FPG family. In terms of assembly, monomer. The cofactor is Zn(2+).

It carries out the reaction Hydrolysis of DNA containing ring-opened 7-methylguanine residues, releasing 2,6-diamino-4-hydroxy-5-(N-methyl)formamidopyrimidine.. It catalyses the reaction 2'-deoxyribonucleotide-(2'-deoxyribose 5'-phosphate)-2'-deoxyribonucleotide-DNA = a 3'-end 2'-deoxyribonucleotide-(2,3-dehydro-2,3-deoxyribose 5'-phosphate)-DNA + a 5'-end 5'-phospho-2'-deoxyribonucleoside-DNA + H(+). Its function is as follows. Involved in base excision repair of DNA damaged by oxidation or by mutagenic agents. Acts as a DNA glycosylase that recognizes and removes damaged bases. Has a preference for oxidized purines, such as 7,8-dihydro-8-oxoguanine (8-oxoG). Has AP (apurinic/apyrimidinic) lyase activity and introduces nicks in the DNA strand. Cleaves the DNA backbone by beta-delta elimination to generate a single-strand break at the site of the removed base with both 3'- and 5'-phosphates. The sequence is that of Formamidopyrimidine-DNA glycosylase from Roseobacter denitrificans (strain ATCC 33942 / OCh 114) (Erythrobacter sp. (strain OCh 114)).